A 538-amino-acid polypeptide reads, in one-letter code: Phosphoenolpyruvate carboxykinase (ATP) (538 aa).

Residues Arg64, Tyr205, and Lys211 each contribute to the substrate site. Residues Lys211, His230, and 246-254 (GLSGTGKTT) contribute to the ATP site. 2 residues coordinate Mn(2+): Lys211 and His230. Asp267 contributes to the Mn(2+) binding site. Residues Glu295, Arg331, 447–448 (RI), and Thr453 contribute to the ATP site. Arg331 serves as a coordination point for substrate.

It belongs to the phosphoenolpyruvate carboxykinase (ATP) family. In terms of assembly, monomer. Mn(2+) is required as a cofactor.

It localises to the cytoplasm. It carries out the reaction oxaloacetate + ATP = phosphoenolpyruvate + ADP + CO2. It functions in the pathway carbohydrate biosynthesis; gluconeogenesis. In terms of biological role, involved in the gluconeogenesis. Catalyzes the conversion of oxaloacetate (OAA) to phosphoenolpyruvate (PEP) through direct phosphoryl transfer between the nucleoside triphosphate and OAA. In Haemophilus influenzae (strain PittGG), this protein is Phosphoenolpyruvate carboxykinase (ATP).